The chain runs to 177 residues: Large ribosomal subunit protein uL6 (177 aa).

Belongs to the universal ribosomal protein uL6 family. As to quaternary structure, part of the 50S ribosomal subunit.

This protein binds to the 23S rRNA, and is important in its secondary structure. It is located near the subunit interface in the base of the L7/L12 stalk, and near the tRNA binding site of the peptidyltransferase center. The protein is Large ribosomal subunit protein uL6 of Vibrio cholerae serotype O1 (strain ATCC 39315 / El Tor Inaba N16961).